We begin with the raw amino-acid sequence, 227 residues long: Ribose-5-phosphate isomerase A (227 aa).

Substrate contacts are provided by residues 26–29 (TGST), 82–85 (DGAD), and 95–98 (KGGG). Glu104 serves as the catalytic Proton acceptor. A substrate-binding site is contributed by Lys122.

Belongs to the ribose 5-phosphate isomerase family. As to quaternary structure, homodimer.

The catalysed reaction is aldehydo-D-ribose 5-phosphate = D-ribulose 5-phosphate. Its pathway is carbohydrate degradation; pentose phosphate pathway; D-ribose 5-phosphate from D-ribulose 5-phosphate (non-oxidative stage): step 1/1. Catalyzes the reversible conversion of ribose-5-phosphate to ribulose 5-phosphate. The chain is Ribose-5-phosphate isomerase A from Streptococcus pyogenes serotype M28 (strain MGAS6180).